Here is a 369-residue protein sequence, read N- to C-terminus: mRNA cap guanine-N(7) methyltransferase 1 (369 aa).

The interval 1-55 (MNKRPRDEPSSSFASAPKRQYGAGGGGYGGHGYSEERSSARRVADHYSARSNQTL) is disordered. Residues 22–32 (GAGGGGYGGHG) show a composition bias toward gly residues. Basic and acidic residues predominate over residues 33–48 (YSEERSSARRVADHYS). The 280-residue stretch at 61–340 (SPIIHLKKLN…LYLAFVLRKR (280 aa)) folds into the mRNA cap 0 methyltransferase domain. 70–71 (NN) is an mRNA binding site. S-adenosyl-L-methionine contacts are provided by residues K74, A92, D114, 149-150 (DC), and 171-173 (QFA).

This sequence belongs to the class I-like SAM-binding methyltransferase superfamily. mRNA cap 0 methyltransferase family.

It is found in the nucleus. The catalysed reaction is a 5'-end (5'-triphosphoguanosine)-ribonucleoside in mRNA + S-adenosyl-L-methionine = a 5'-end (N(7)-methyl 5'-triphosphoguanosine)-ribonucleoside in mRNA + S-adenosyl-L-homocysteine. Functionally, mRNA-capping methyltransferase that methylates the N7 position of the added guanosine to the 5'-cap structure of mRNAs. Binds RNA containing 5'-terminal GpppC. In Oryza sativa subsp. japonica (Rice), this protein is mRNA cap guanine-N(7) methyltransferase 1.